Consider the following 237-residue polypeptide: 2,3-bisphosphoglycerate-dependent phosphoglycerate mutase (237 aa).

Residues 8–15 (RHGQSAWN), 21–22 (TG), Arg60, 87–90 (ERHY), Lys98, 114–115 (RR), and 180–181 (GN) each bind substrate. The active-site Tele-phosphohistidine intermediate is His9. The active-site Proton donor/acceptor is Glu87.

The protein belongs to the phosphoglycerate mutase family. BPG-dependent PGAM subfamily. As to quaternary structure, homodimer.

It carries out the reaction (2R)-2-phosphoglycerate = (2R)-3-phosphoglycerate. It participates in carbohydrate degradation; glycolysis; pyruvate from D-glyceraldehyde 3-phosphate: step 3/5. Its function is as follows. Catalyzes the interconversion of 2-phosphoglycerate and 3-phosphoglycerate. The chain is 2,3-bisphosphoglycerate-dependent phosphoglycerate mutase from Hyphomonas neptunium (strain ATCC 15444).